The following is a 252-amino-acid chain: Phosphoglycolate phosphatase (252 aa).

The Nucleophile role is filled by aspartate 13. Mg(2+)-binding residues include aspartate 13, aspartate 15, and aspartate 192.

It belongs to the HAD-like hydrolase superfamily. CbbY/CbbZ/Gph/YieH family. Monomer. It depends on Mg(2+) as a cofactor. The cofactor is chloride.

It catalyses the reaction 2-phosphoglycolate + H2O = glycolate + phosphate. It participates in organic acid metabolism; glycolate biosynthesis; glycolate from 2-phosphoglycolate: step 1/1. Its function is as follows. Specifically catalyzes the dephosphorylation of 2-phosphoglycolate. Is involved in the dissimilation of the intracellular 2-phosphoglycolate formed during the DNA repair of 3'-phosphoglycolate ends, a major class of DNA lesions induced by oxidative stress. The protein is Phosphoglycolate phosphatase of Salmonella typhimurium (strain LT2 / SGSC1412 / ATCC 700720).